The chain runs to 792 residues: Zinc finger protein 606 (792 aa).

One can recognise a KRAB domain in the interval 62–133 (VTFKDVAVDF…EQACPQRTCP (72 aa)). The C2H2-type 1; degenerate zinc-finger motif lies at 289–311 (FKCTDAVKSFNHIIHFGDHKGIH). Residues 317 to 344 (YEYKECHQIFNQSPSFNEHPRLHVGENQ) form a C2H2-type 2; degenerate zinc finger. The segment at 400 to 422 (YDYNECGTSFIWSSYLIQHKKTH) adopts a C2H2-type 3; degenerate zinc-finger fold. 13 C2H2-type zinc fingers span residues 428–450 (YECD…ERTH), 456–478 (YECN…KRIH), 484–506 (YVCN…QRTH), 512–534 (FECT…MRMH), 540–562 (FKCD…ERTH), 568–590 (YKCT…QRTH), 596–618 (YNCQ…EIIH), 624–646 (YECN…QRTH), 652–674 (YECN…RRIH), 680–702 (YKCN…RRTH), 708–730 (YRCN…LRNH), 736–758 (YKCN…QRMH), and 764–786 (FICS…QRNH).

This sequence belongs to the krueppel C2H2-type zinc-finger protein family. Widely expressed in adult and fetal tissues.

The protein localises to the nucleus. Functionally, may act as a transcriptional repressor. The protein is Zinc finger protein 606 (ZNF606) of Homo sapiens (Human).